We begin with the raw amino-acid sequence, 200 residues long: Large ribosomal subunit protein uL4 (200 aa).

The segment at 42–69 (SKAQKNRSDVSGGGRKPWRQKGTGRARA) is disordered.

Belongs to the universal ribosomal protein uL4 family. Part of the 50S ribosomal subunit.

Functionally, one of the primary rRNA binding proteins, this protein initially binds near the 5'-end of the 23S rRNA. It is important during the early stages of 50S assembly. It makes multiple contacts with different domains of the 23S rRNA in the assembled 50S subunit and ribosome. Its function is as follows. Forms part of the polypeptide exit tunnel. The chain is Large ribosomal subunit protein uL4 from Alcanivorax borkumensis (strain ATCC 700651 / DSM 11573 / NCIMB 13689 / SK2).